The primary structure comprises 474 residues: Glutamate--tRNA ligase (474 aa).

Residues 9–19 (PSPTGYLHVGG) carry the 'HIGH' region motif. Positions 240–244 (KLSKR) match the 'KMSKS' region motif. Lysine 243 provides a ligand contact to ATP.

It belongs to the class-I aminoacyl-tRNA synthetase family. Glutamate--tRNA ligase type 1 subfamily. As to quaternary structure, monomer.

Its subcellular location is the cytoplasm. It carries out the reaction tRNA(Glu) + L-glutamate + ATP = L-glutamyl-tRNA(Glu) + AMP + diphosphate. Functionally, catalyzes the attachment of glutamate to tRNA(Glu) in a two-step reaction: glutamate is first activated by ATP to form Glu-AMP and then transferred to the acceptor end of tRNA(Glu). The sequence is that of Glutamate--tRNA ligase from Vibrio cholerae serotype O1 (strain ATCC 39315 / El Tor Inaba N16961).